The chain runs to 72 residues: MVAIFNFQSLLVVILLFICTCTYIRGSYPSLLEVRDKHSFSGLPRKAAIIGERLSPWVSACCLIMGLWTLYN.

The first 26 residues, Met1–Gly26, serve as a signal peptide directing secretion. Residues Ser27 to Ala47 lie on the Extracellular side of the membrane. A helical membrane pass occupies residues Ala48–Trp68. At Thr69–Asn72 the chain is on the cytoplasmic side.

It belongs to the KISH family.

The protein resides in the golgi apparatus membrane. Functionally, involved in the early part of the secretory pathway. The chain is Protein kish (tmem167) from Dictyostelium discoideum (Social amoeba).